The primary structure comprises 220 residues: Guanylate kinase (220 aa).

The Guanylate kinase-like domain occupies 11–190 (GVLFVLSSPS…CYGEVMAILR (180 aa)). 18–25 (SPSGAGKT) provides a ligand contact to ATP.

This sequence belongs to the guanylate kinase family.

The protein resides in the cytoplasm. It carries out the reaction GMP + ATP = GDP + ADP. Its function is as follows. Essential for recycling GMP and indirectly, cGMP. This is Guanylate kinase from Sphingopyxis alaskensis (strain DSM 13593 / LMG 18877 / RB2256) (Sphingomonas alaskensis).